The chain runs to 366 residues: Peptide chain release factor 1 (366 aa).

An N5-methylglutamine modification is found at Q239.

This sequence belongs to the prokaryotic/mitochondrial release factor family. In terms of processing, methylated by PrmC. Methylation increases the termination efficiency of RF1.

It localises to the cytoplasm. Functionally, peptide chain release factor 1 directs the termination of translation in response to the peptide chain termination codons UAG and UAA. The protein is Peptide chain release factor 1 of Albidiferax ferrireducens (strain ATCC BAA-621 / DSM 15236 / T118) (Rhodoferax ferrireducens).